We begin with the raw amino-acid sequence, 175 residues long: ATP synthase subunit delta (175 aa).

This sequence belongs to the ATPase delta chain family. In terms of assembly, F-type ATPases have 2 components, F(1) - the catalytic core - and F(0) - the membrane proton channel. F(1) has five subunits: alpha(3), beta(3), gamma(1), delta(1), epsilon(1). F(0) has three main subunits: a(1), b(2) and c(10-14). The alpha and beta chains form an alternating ring which encloses part of the gamma chain. F(1) is attached to F(0) by a central stalk formed by the gamma and epsilon chains, while a peripheral stalk is formed by the delta and b chains.

Its subcellular location is the cell membrane. Functionally, f(1)F(0) ATP synthase produces ATP from ADP in the presence of a proton or sodium gradient. F-type ATPases consist of two structural domains, F(1) containing the extramembraneous catalytic core and F(0) containing the membrane proton channel, linked together by a central stalk and a peripheral stalk. During catalysis, ATP synthesis in the catalytic domain of F(1) is coupled via a rotary mechanism of the central stalk subunits to proton translocation. This protein is part of the stalk that links CF(0) to CF(1). It either transmits conformational changes from CF(0) to CF(1) or is implicated in proton conduction. This is ATP synthase subunit delta from Stenotrophomonas maltophilia (strain K279a).